We begin with the raw amino-acid sequence, 443 residues long: ATP-dependent protease ATPase subunit HslU (443 aa).

ATP is bound by residues isoleucine 18 and 60 to 65 (GVGKTE). The disordered stretch occupies residues 137–156 (PPPRDAWGQNEQSEDTSNTR). Residues 145–156 (QNEQSEDTSNTR) show a composition bias toward polar residues. Positions 256, 321, and 393 each coordinate ATP.

This sequence belongs to the ClpX chaperone family. HslU subfamily. In terms of assembly, a double ring-shaped homohexamer of HslV is capped on each side by a ring-shaped HslU homohexamer. The assembly of the HslU/HslV complex is dependent on binding of ATP.

Its subcellular location is the cytoplasm. Its function is as follows. ATPase subunit of a proteasome-like degradation complex; this subunit has chaperone activity. The binding of ATP and its subsequent hydrolysis by HslU are essential for unfolding of protein substrates subsequently hydrolyzed by HslV. HslU recognizes the N-terminal part of its protein substrates and unfolds these before they are guided to HslV for hydrolysis. The sequence is that of ATP-dependent protease ATPase subunit HslU from Vibrio vulnificus (strain YJ016).